We begin with the raw amino-acid sequence, 160 residues long: Small ribosomal subunit protein uS7 (160 aa).

Belongs to the universal ribosomal protein uS7 family. Part of the 30S ribosomal subunit. Contacts proteins S9 and S11.

Its function is as follows. One of the primary rRNA binding proteins, it binds directly to 16S rRNA where it nucleates assembly of the head domain of the 30S subunit. Is located at the subunit interface close to the decoding center, probably blocks exit of the E-site tRNA. In Rickettsia prowazekii (strain Madrid E), this protein is Small ribosomal subunit protein uS7.